Consider the following 318-residue polypeptide: NADH-ubiquinone oxidoreductase chain 1 (318 aa).

The next 8 membrane-spanning stretches (helical) occupy residues 2 to 22 (PMTN…FLML), 68 to 88 (ITLY…LWTP), 100 to 120 (LGLL…LWSG), 146 to 166 (LAII…STLV), 171 to 191 (HLWL…STLA), 213 to 233 (IEYA…NIIM), 253 to 273 (ELYT…FLWI), and 285 to 305 (LMHL…MWYI).

It belongs to the complex I subunit 1 family. As to quaternary structure, core subunit of respiratory chain NADH dehydrogenase (Complex I) which is composed of 45 different subunits.

It is found in the mitochondrion inner membrane. The enzyme catalyses a ubiquinone + NADH + 5 H(+)(in) = a ubiquinol + NAD(+) + 4 H(+)(out). Functionally, core subunit of the mitochondrial membrane respiratory chain NADH dehydrogenase (Complex I) which catalyzes electron transfer from NADH through the respiratory chain, using ubiquinone as an electron acceptor. Essential for the catalytic activity and assembly of complex I. This is NADH-ubiquinone oxidoreductase chain 1 (MT-ND1) from Pan troglodytes (Chimpanzee).